The sequence spans 358 residues: UDP-N-acetylglucosamine--N-acetylmuramyl-(pentapeptide) pyrophosphoryl-undecaprenol N-acetylglucosamine transferase (358 aa).

Residues 11-13 (TGG), Asn120, Arg161, Ser188, and Gln282 contribute to the UDP-N-acetyl-alpha-D-glucosamine site.

This sequence belongs to the glycosyltransferase 28 family. MurG subfamily.

The protein resides in the cell inner membrane. It carries out the reaction di-trans,octa-cis-undecaprenyl diphospho-N-acetyl-alpha-D-muramoyl-L-alanyl-D-glutamyl-meso-2,6-diaminopimeloyl-D-alanyl-D-alanine + UDP-N-acetyl-alpha-D-glucosamine = di-trans,octa-cis-undecaprenyl diphospho-[N-acetyl-alpha-D-glucosaminyl-(1-&gt;4)]-N-acetyl-alpha-D-muramoyl-L-alanyl-D-glutamyl-meso-2,6-diaminopimeloyl-D-alanyl-D-alanine + UDP + H(+). It functions in the pathway cell wall biogenesis; peptidoglycan biosynthesis. Its function is as follows. Cell wall formation. Catalyzes the transfer of a GlcNAc subunit on undecaprenyl-pyrophosphoryl-MurNAc-pentapeptide (lipid intermediate I) to form undecaprenyl-pyrophosphoryl-MurNAc-(pentapeptide)GlcNAc (lipid intermediate II). This is UDP-N-acetylglucosamine--N-acetylmuramyl-(pentapeptide) pyrophosphoryl-undecaprenol N-acetylglucosamine transferase from Synechococcus sp. (strain CC9605).